The following is a 671-amino-acid chain: DNA ligase (671 aa).

NAD(+) is bound by residues 32–36 (DAEYD), 81–82 (SL), and Glu-113. Residue Lys-115 is the N6-AMP-lysine intermediate of the active site. NAD(+) is bound by residues Arg-136, Glu-173, Lys-290, and Lys-314. Residues Cys-408, Cys-411, Cys-426, and Cys-432 each contribute to the Zn(2+) site. One can recognise a BRCT domain in the interval 593-671 (EIDSPFAGKT…EAEMMRLLGE (79 aa)).

The protein belongs to the NAD-dependent DNA ligase family. LigA subfamily. Mg(2+) is required as a cofactor. It depends on Mn(2+) as a cofactor.

The catalysed reaction is NAD(+) + (deoxyribonucleotide)n-3'-hydroxyl + 5'-phospho-(deoxyribonucleotide)m = (deoxyribonucleotide)n+m + AMP + beta-nicotinamide D-nucleotide.. DNA ligase that catalyzes the formation of phosphodiester linkages between 5'-phosphoryl and 3'-hydroxyl groups in double-stranded DNA using NAD as a coenzyme and as the energy source for the reaction. It is essential for DNA replication and repair of damaged DNA. The protein is DNA ligase of Klebsiella pneumoniae (strain 342).